The primary structure comprises 1051 residues: Leucine zipper protein 1 (1051 aa).

Ala-2 carries the N-acetylalanine modification. Positions 11–354 form a coiled coil; the sequence is ASNRHLRFKL…KLQVKKQKEL (344 aa). Disordered regions lie at residues 247–293, 374–401, 432–554, and 569–601; these read ISST…KDLN, RTKL…HKRE, AAKA…SQVT, and ASSQ…SKAP. A compositionally biased stretch (basic and acidic residues) spans 254–293; the sequence is KESRRKGSLDYLKQVENETRDKSENEKNRNQEDNKVKDLN. A phosphoserine mark is found at Ser-256, Ser-261, Ser-395, Ser-513, Ser-571, Ser-575, Ser-612, and Ser-660. A compositionally biased stretch (polar residues) spans 569-578; sequence ASSQRASSEG. The tract at residues 675–727 is disordered; that stretch reads VNTTITPEPEPKLQPNSREKVKSRGGTRTPLFENDKNAAVENDSAKSMRSSSN. A Phosphothreonine modification is found at Thr-680. At Ser-691 the chain carries Phosphoserine. Over residues 707-720 the composition is skewed to basic and acidic residues; the sequence is ENDKNAAVENDSAK. Ser-746 bears the Phosphoserine mark. Positions 789–799 are enriched in low complexity; the sequence is VTSKVTSSITI. Residues 789-837 are disordered; sequence VTSKVTSSITIYPSDSSGPRAVPTEAPRERHTSTSNIQVGPPELTSVSN. The segment at 834–884 is required for interaction with FLNA; sequence SVSNHISSPLELSIHKHDITLQLTEAERVGDGSPKNRAETVVSRSSILIKP. A Phosphoserine modification is found at Ser-906. Residues 929–938 are compositionally biased toward basic and acidic residues; it reads RDLKCSEDPP. The tract at residues 929 to 1000 is disordered; it reads RDLKCSEDPP…TQSSLTASEV (72 aa). Composition is skewed to polar residues over residues 946 to 958 and 989 to 999; these read EATN…SSTD and RRTQSSLTASE. Residue Thr-957 is modified to Phosphothreonine. At Ser-993 the chain carries Phosphoserine.

As to quaternary structure, component of the CERF-1 ISWI chromatin remodeling complex (also called the CECR2-containing remodeling factor (CERF) complex) at least composed of CECR2 and SMARCA1. Component of the CERF-5 ISWI chromatin remodeling complex at least composed of CECR2 and SMARCA5/SNF2H. LUZP1 is detected as part of the CERF-1 and CERF-5 complexes in embryonic stem (ES) cells where it is involved in complex stabilization but is not detected in the complexes in the testis. Interacts (via C-terminus) with LIMA1/EPLIN; both proteins restrict ciliation and may work together to regulate this process. Interacts with myosin light chain MYL9; the interaction results in inhibition of phosphorylation of MYL9 by DAPK3. Interacts with DAPK3; the interaction is likely to occur throughout the cell cycle and reduces the LUZP1-mediated suppression of MYL9 phosphorylation. Interacts with the chromosomal passenger complex (CPC); CPC kinase activity is required for localization of LUZP1 to the centromere. In terms of tissue distribution, expressed in cerebral cortex, cerebellum, hippocampus and brain stem.

The protein resides in the cytoplasm. It localises to the cytoskeleton. Its subcellular location is the microtubule organizing center. The protein localises to the centrosome. It is found in the cilium basal body. The protein resides in the midbody. It localises to the chromosome. Its subcellular location is the centromere. The protein localises to the spindle. It is found in the stress fiber. The protein resides in the nucleus. It localises to the cell projection. Its subcellular location is the dendrite. The protein localises to the perikaryon. It is found in the cell junction. The protein resides in the tight junction. F-actin cross-linking protein. Stabilizes actin and acts as a negative regulator of primary cilium formation. Positively regulates the phosphorylation of both myosin II and protein phosphatase 1 regulatory subunit PPP1R12A/MYPT1 and promotes the assembly of myosin II stacks within actin stress fibers. Inhibits the phosphorylation of myosin light chain MYL9 by DAPK3 and suppresses the constriction velocity of the contractile ring during cytokinesis. Binds to microtubules and promotes epithelial cell apical constriction by up-regulating levels of diphosphorylated myosin light chain (MLC) through microtubule-dependent inhibition of MLC dephosphorylation by myosin phosphatase. Involved in regulation of cell migration, nuclear size and centriole number, probably through regulation of the actin cytoskeleton. Component of the CERF-1 and CERF-5 chromatin remodeling complexes in embryonic stem cells where it acts to stabilize the complexes. Plays a role in embryonic brain and cardiovascular development. This Rattus norvegicus (Rat) protein is Leucine zipper protein 1 (Luzp1).